Here is a 158-residue protein sequence, read N- to C-terminus: Small ribosomal subunit protein bS6 (158 aa).

The span at 92 to 149 (RVDEHEEGPSAMMRKADRDRERDDRGPREGGFRGDREGRGDRDGFRGDRGPRRPREDA) shows a compositional bias: basic and acidic residues. The interval 92 to 158 (RVDEHEEGPS…ADAPAAAVEE (67 aa)) is disordered.

This sequence belongs to the bacterial ribosomal protein bS6 family.

In terms of biological role, binds together with bS18 to 16S ribosomal RNA. This is Small ribosomal subunit protein bS6 from Rhodopseudomonas palustris (strain ATCC BAA-98 / CGA009).